Here is a 461-residue protein sequence, read N- to C-terminus: Flavin-containing monooxygenase FMO GS-OX-like 8 (461 aa).

Position 20–25 (Gly20–Gly25) interacts with FAD. Gly220–Gly225 serves as a coordination point for NADP(+).

It belongs to the FMO family. Interacts with EER5. FAD serves as cofactor.

Its function is as follows. Catalyzes the conversion of methylthioalkyl glucosinolates of any chain length into methylsulfinylalkyl glucosinolates. The chain is Flavin-containing monooxygenase FMO GS-OX-like 8 from Arabidopsis thaliana (Mouse-ear cress).